The following is a 206-amino-acid chain: Uridine kinase (206 aa).

An ATP-binding site is contributed by 11–18; that stretch reads GGSASGKT.

This sequence belongs to the uridine kinase family.

The protein localises to the cytoplasm. The enzyme catalyses uridine + ATP = UMP + ADP + H(+). It catalyses the reaction cytidine + ATP = CMP + ADP + H(+). The protein operates within pyrimidine metabolism; CTP biosynthesis via salvage pathway; CTP from cytidine: step 1/3. It functions in the pathway pyrimidine metabolism; UMP biosynthesis via salvage pathway; UMP from uridine: step 1/1. This chain is Uridine kinase, found in Lactococcus lactis subsp. lactis (strain IL1403) (Streptococcus lactis).